The primary structure comprises 164 residues: Endoribonuclease YbeY (164 aa).

Zn(2+)-binding residues include histidine 117, histidine 121, and histidine 127.

The protein belongs to the endoribonuclease YbeY family. Zn(2+) serves as cofactor.

Its subcellular location is the cytoplasm. Its function is as follows. Single strand-specific metallo-endoribonuclease involved in late-stage 70S ribosome quality control and in maturation of the 3' terminus of the 16S rRNA. The polypeptide is Endoribonuclease YbeY (Mycoplasma capricolum subsp. capricolum (strain California kid / ATCC 27343 / NCTC 10154)).